A 394-amino-acid chain; its full sequence is LL-diaminopimelate aminotransferase (394 aa).

Y14 and G41 together coordinate substrate. Pyridoxal 5'-phosphate-binding positions include Y71, 104–105, Y128, N174, Y205, and 233–235; these read AK and SFS. K105, Y128, and N174 together coordinate substrate. The residue at position 236 (K236) is an N6-(pyridoxal phosphate)lysine. 2 residues coordinate pyridoxal 5'-phosphate: R244 and N275. Residues N275 and R369 each contribute to the substrate site.

Belongs to the class-I pyridoxal-phosphate-dependent aminotransferase family. LL-diaminopimelate aminotransferase subfamily. Homodimer. It depends on pyridoxal 5'-phosphate as a cofactor.

The enzyme catalyses (2S,6S)-2,6-diaminopimelate + 2-oxoglutarate = (S)-2,3,4,5-tetrahydrodipicolinate + L-glutamate + H2O + H(+). Its pathway is amino-acid biosynthesis; L-lysine biosynthesis via DAP pathway; LL-2,6-diaminopimelate from (S)-tetrahydrodipicolinate (aminotransferase route): step 1/1. In terms of biological role, involved in the synthesis of meso-diaminopimelate (m-DAP or DL-DAP), required for both lysine and peptidoglycan biosynthesis. Catalyzes the direct conversion of tetrahydrodipicolinate to LL-diaminopimelate. This is LL-diaminopimelate aminotransferase from Chlamydia trachomatis serovar L2b (strain UCH-1/proctitis).